The sequence spans 133 residues: uncharacterized protein (133 aa).

4 consecutive transmembrane segments (helical) span residues 5–27 (KLFF…FSLI), 42–64 (IAWN…YSLY), 77–99 (ALIS…TFSS), and 103–125 (LVWW…LLLK).

It is found in the cell membrane. This is an uncharacterized protein from Bacillus subtilis (strain 168).